The chain runs to 394 residues: GDP-mannose transporter (394 aa).

The Cytoplasmic segment spans residues 1-56 (MSNKKNEDIEMRAVEGANDFGGEKDPFLGRNSPVLRPRGREPTASAYFGKLDNSPG). A helical membrane pass occupies residues 57 to 77 (ASIIAYCLSSISMTVVNKYVV). Over 78–81 (SGES) the chain is Lumenal. Residues 82-102 (WNLNFFYLGVQSLVCTIAILL) form a helical membrane-spanning segment. The Cytoplasmic segment spans residues 103–122 (SRQTGLIKNLAPFDSNKAKR). The chain crosses the membrane as a helical span at residues 123-145 (WFPVSLLLVSMIYTGANALQYLS). The Lumenal portion of the chain corresponds to 146 to 150 (VPVYT). The chain crosses the membrane as a helical span at residues 151–168 (IFKNLTIIVIAYGEVLWF). The Cytoplasmic segment spans residues 169 to 174 (GGSVTP). A helical transmembrane segment spans residues 175 to 199 (LMLLSFGLMVLSSVVAAWADIQAAI). At 200-207 (DGVGHSAE) the chain is on the lumenal side. Residues 208–228 (TSAALATLNAGYAWMGLNVVC) form a helical membrane-spanning segment. Over 229–249 (TSSYLLGMRKVIKKMNFKDYD) the chain is Cytoplasmic. Residues 250-270 (SMFYNNLLTIPVLVVCSLLVE) traverse the membrane as a helical segment. Residues 271–288 (DWSSENLAKNFPIETRNK) are Lumenal-facing. The chain crosses the membrane as a helical span at residues 289 to 309 (LMVGMIYSGLAAIFISYCSAW). The Cytoplasmic portion of the chain corresponds to 310-317 (CIRVTSST). The chain crosses the membrane as a helical span at residues 318-338 (TYSMVGALNKLPIAISGLIFF). Topologically, residues 339 to 341 (DAP) are lumenal. Residues 342–362 (ITFGSITAIAVGFVSGLVFAW) form a helical membrane-spanning segment. Topologically, residues 363–394 (AKVRQKAQEAGLLPTTKPTMSASAQSNRDANS) are cytoplasmic.

The protein belongs to the TPT transporter family. SLC35D subfamily. Homooligomer.

It is found in the golgi apparatus membrane. The protein localises to the cytoplasmic vesicle membrane. Its subcellular location is the endoplasmic reticulum membrane. Its function is as follows. Involved in the import of GDP-mannose from the cytoplasm into the Golgi lumen. The polypeptide is GDP-mannose transporter (VRG4) (Chaetomium globosum (strain ATCC 6205 / CBS 148.51 / DSM 1962 / NBRC 6347 / NRRL 1970) (Soil fungus)).